A 186-amino-acid chain; its full sequence is Large ribosomal subunit protein uL22 (186 aa).

S158 is subject to Phosphoserine. Residues 159 to 186 form a disordered region; sequence KATDDEPAKKKLSKKKLQRQKEKMLRSE. At T161 the chain carries Phosphothreonine. A compositionally biased stretch (basic and acidic residues) spans 177 to 186; that stretch reads RQKEKMLRSE.

The protein belongs to the universal ribosomal protein uL22 family.

This Drosophila melanogaster (Fruit fly) protein is Large ribosomal subunit protein uL22 (RpL17).